Consider the following 210-residue polypeptide: MARALVLLSVVLVSLLVNQGTASENQRLFNNAVIRVQHLHQLAAKMINDFEDNLLPEERRQLSKIFPLSFCNSDSIEAPTGKDETQKSSMLKLLRISFRLIESWEFPSQTLSGAVSNSLTVGNPNQITEKLADLKVGISVLIKGCLDGQPNMDDNDSLPLPFEDFYLTMGESSLRESFRLLACFKKDMHKVETYLRVANCRRSLDSNCTL.

The N-terminal stretch at 1–23 is a signal peptide; that stretch reads MARALVLLSVVLVSLLVNQGTAS. Position 38 (histidine 38) interacts with Zn(2+). Cysteine 71 and cysteine 183 are oxidised to a cystine. Glutamate 192 provides a ligand contact to Zn(2+). A disulfide bridge links cysteine 200 with cysteine 208.

The protein belongs to the somatotropin/prolactin family.

It is found in the secreted. Functionally, growth hormone plays an important role in growth control. The polypeptide is Somatotropin (gh) (Ctenopharyngodon idella (Grass carp)).